Consider the following 461-residue polypeptide: Histone acetyltransferase KAT5 (461 aa).

Positions 8-65 (IEGCRLPVLRRNQDNEDEWPLAEILSVKDISGRKLFYVHYIDFNKRLDEWVTHERLDL) constitute a Tudor-knot domain. K52 bears the N6-acetyllysine mark. The segment at 70-168 (FPKKEAKTPT…RMTGSLVSDR (99 aa)) is disordered. Phosphoserine is present on residues S86 and S90. The segment covering 90–100 (SPEREVKRKVE) has biased composition (basic and acidic residues). 4 positions are modified to N6-acetyllysine; by autocatalysis: K96, K98, K135, and K137. The residue at position 147 (S147) is a Phosphoserine. Residues 175-452 (TRMKNIECIE…IDSKCLHFTP (278 aa)) form the MYST-type HAT domain. The C2HC MYST-type zinc finger occupies 208 to 233 (LYLCEFCLKYGRSLKCLQRHLTKCDL). K275 carries the post-translational modification N6-acetyllysine; by autocatalysis. Positions 316–461 (ACILTLPPYQ…PKDWSKRGKW (146 aa)) are interaction with ATF2. Acetyl-CoA contacts are provided by residues 318 to 320 (ILT) and 325 to 331 (QRRGYGK). E351 acts as the Proton donor/acceptor in catalysis. Acetyl-CoA contacts are provided by S355 and S364. Residue K378 forms a Glycyl lysine isopeptide (Lys-Gly) (interchain with G-Cter in SUMO1); alternate linkage. K378 is covalently cross-linked (Glycyl lysine isopeptide (Lys-Gly) (interchain with G-Cter in SUMO2); alternate). Residue K399 forms a Glycyl lysine isopeptide (Lys-Gly) (interchain with G-Cter in SUMO1) linkage.

Belongs to the MYST (SAS/MOZ) family. In terms of assembly, component of the NuA4 histone acetyltransferase complex which contains the catalytic subunit KAT5/TIP60 and the subunits EP400, TRRAP/PAF400, BRD8/SMAP, EPC1, DMAP1/DNMAP1, RUVBL1/TIP49, RUVBL2, ING3, actin, ACTL6A/BAF53A, MORF4L1/MRG15, MORF4L2/MRGX, MRGBP, YEATS4/GAS41, VPS72/YL1 and MEAF6. KAT5/TIP60, EPC1, and ING3 together constitute a minimal HAT complex termed Piccolo NuA4. The NuA4 complex interacts with MYC. Interacts with ATM. Interacts with JADE1. Interacts with PLA2G4A/CPLA2, EDNRA and HDAC7. Interacts with the cytoplasmic tail of APP and APBB1/FE65. Interacts with TRIM24 and TRIM68. Forms a complex with SENP6 and UBE2I in response to UV irradiation. Identified in a complex with HINT1. Interacts with ATF2 and CUL3. Interacts with NR1D2 (via N-terminus). Component of a SWR1-like complex. Interacts with FOXP3. Interacts with ZBTB49. Interacts with SRF. Interacts with ATF3; promoting autoacetylation and deubiquitination by USP7. Interacts with EP300/p300; interaction promotes KAT5 autoacetylation. Interacts with PRKDC; interaction is impaired following KAT5 sumoylation. Interacts with GPR50. Post-translationally, phosphorylated on Ser-86 and Ser-90; enhanced during G2/M phase. The phosphorylated form has a higher activity. Phosphorylation at Ser-90 by CDK1 or CDK9 is a prerequisite for phosphorylation at Ser-86 by GSK3. Phosphorylation at Ser-86 by GSK3 (GSK3A or GSK3B) activates acetyltransferase and acyltransferase activities. Phosphorylation at Ser-90 by CDK9 promotes KAT5 recruitment to chromatin. Phosphorylation by VRK1 following DNA damage promotes KAT5 association with chromatin and histone acetyltransferase activity. In terms of processing, autoacetylated. Autoacetylation is required for histone acetyltransferase activity. Autoacetylation at Lys-275 is facilitated by interaction with EP300/p300: it prevents ubiquitination and subsequent degradation by the proteasome and promotes acetylation of target proteins. Deacetylated by HDAC3 and SIRT1. Deacetylation by HDAC3 promotes its ubiquitination and cytoplasmic localization. Sumoylated by UBE2I at Lys-378 and Lys-399, leading to increase of its histone acetyltransferase activity in UV-induced DNA damage response, as well as its translocation to nuclear bodies. Sumoylation with SUMO2 by PIAS4 at Lys-378 promotes repair of DNA double-strand breaks (DSBs) via homologous recombination (HR). Sumoylation by PIAS4 impairs interaction with PRKDC, inhibiting non-homologous end joining (NHEJ)-mediated repair of DSBs, thereby facilitating HR. Desumoylated by SENP3. Post-translationally, ubiquitinated by MDM2, leading to its proteasome-dependent degradation. Ubiquitination is prevented by autoacetylation at Lys-275. Ubiquitinated following deacetylation by HDAC3, leading to cytoplasmic localization. Deubiquitinated by USP7 following interaction with ATF3, promoting its stabilization.

The protein localises to the nucleus. It localises to the chromosome. The protein resides in the cytoplasm. Its subcellular location is the centromere. It is found in the kinetochore. The protein localises to the cytoskeleton. It localises to the spindle pole. The protein resides in the nucleolus. Its subcellular location is the perinuclear region. The catalysed reaction is L-lysyl-[histone] + acetyl-CoA = N(6)-acetyl-L-lysyl-[histone] + CoA + H(+). The enzyme catalyses L-lysyl-[protein] + acetyl-CoA = N(6)-acetyl-L-lysyl-[protein] + CoA + H(+). It catalyses the reaction (2E)-butenoyl-CoA + L-lysyl-[protein] = N(6)-(2E)-butenoyl-L-lysyl-[protein] + CoA + H(+). It carries out the reaction 2-hydroxyisobutanoyl-CoA + L-lysyl-[protein] = N(6)-(2-hydroxyisobutanoyl)-L-lysyl-[protein] + CoA + H(+). The catalysed reaction is (S)-lactoyl-CoA + L-lysyl-[protein] = N(6)-[(S)-lactoyl]-L-lysyl-[protein] + CoA + H(+). With respect to regulation, acyltransferase and acetyltransferase activities are activated by phosphorylation and autoacetylation. Autoacetylation activates the histone acetyltransferase activity. Catalytic subunit of the NuA4 histone acetyltransferase complex, a multiprotein complex involved in transcriptional activation of select genes principally by acetylation of nucleosomal histones H2A and H4. Histone acetylation alters nucleosome-DNA interactions and promotes interaction of the modified histones with other proteins which positively regulate transcription. The NuA4 histone acetyltransferase complex is required for the activation of transcriptional programs associated with proto-oncogene mediated growth induction, tumor suppressor mediated growth arrest and replicative senescence, apoptosis, and DNA repair. The NuA4 complex plays a direct role in repair of DNA double-strand breaks (DSBs) by promoting homologous recombination (HR): the complex inhibits TP53BP1 binding to chromatin via MBTD1, which recognizes and binds histone H4 trimethylated at 'Lys-20' (H4K20me), and KAT5 that catalyzes acetylation of 'Lys-15' of histone H2A (H2AK15ac), thereby blocking the ubiquitination mark required for TP53BP1 localization at DNA breaks. Also involved in DSB repair by mediating acetylation of 'Lys-5' of histone H2AX (H2AXK5ac), promoting NBN/NBS1 assembly at the sites of DNA damage. The NuA4 complex plays a key role in hematopoietic stem cell maintenance and is required to maintain acetylated H2A.Z/H2AZ1 at MYC target genes. The NuA4 complex is also required for spermatid development by promoting acetylation of histones: histone hyperacetylation is required for histone replacement during the transition from round to elongating spermatids. Component of a SWR1-like complex that specifically mediates the removal of histone H2A.Z/H2AZ1 from the nucleosome. Also acetylates non-histone proteins, such as BMAL1, ATM, AURKB, CHKA, CGAS, ERCC4/XPF, LPIN1, TP53/p53, NDC80/HEC1, NR1D2, RAN, SOX4, FOXP3, SQSTM1, ULK1 and RUBCNL/Pacer. Directly acetylates and activates ATM. Promotes nucleotide excision repair (NER) by mediating acetylation of ERCC4/XPF, thereby promoting formation of the ERCC4-ERCC1 complex. Relieves NR1D2-mediated inhibition of APOC3 expression by acetylating NR1D2. Acts as a regulator of regulatory T-cells (Treg) by catalyzing FOXP3 acetylation, thereby promoting FOXP3 transcriptional repressor activity. Involved in skeletal myoblast differentiation by mediating acetylation of SOX4. Catalyzes acetylation of APBB1/FE65, increasing its transcription activator activity. Promotes transcription elongation during the activation phase of the circadian cycle by catalyzing acetylation of BMAL1, promoting elongation of circadian transcripts. Together with GSK3 (GSK3A or GSK3B), acts as a regulator of autophagy: phosphorylated at Ser-86 by GSK3 under starvation conditions, leading to activate acetyltransferase activity and promote acetylation of key autophagy regulators, such as ULK1 and RUBCNL/Pacer. Acts as a regulator of the cGAS-STING innate antiviral response by catalyzing acetylation the N-terminus of CGAS, thereby promoting CGAS DNA-binding and activation. Also regulates lipid metabolism by mediating acetylation of CHKA or LPIN1. Promotes lipolysis of lipid droplets following glucose deprivation by mediating acetylation of isoform 1 of CHKA, thereby promoting monomerization of CHKA and its conversion into a tyrosine-protein kinase. Acts as a regulator of fatty-acid-induced triacylglycerol synthesis by catalyzing acetylation of LPIN1, thereby promoting the synthesis of diacylglycerol. In addition to protein acetyltransferase, can use different acyl-CoA substrates, such as (2E)-butenoyl-CoA (crotonyl-CoA), S-lactoyl-CoA (lactyl-CoA) and 2-hydroxyisobutanoyl-CoA (2-hydroxyisobutyryl-CoA), and is able to mediate protein crotonylation, lactylation and 2-hydroxyisobutyrylation, respectively. Acts as a key regulator of chromosome segregation and kinetochore-microtubule attachment during mitosis by mediating acetylation or crotonylation of target proteins. Catalyzes acetylation of AURKB at kinetochores, increasing AURKB activity and promoting accurate chromosome segregation in mitosis. Acetylates RAN during mitosis, promoting microtubule assembly at mitotic chromosomes. Acetylates NDC80/HEC1 during mitosis, promoting robust kinetochore-microtubule attachment. Catalyzes crotonylation of MAPRE1/EB1, thereby ensuring accurate spindle positioning in mitosis. Catalyzes lactylation of NBN/NBS1 in response to DNA damage, thereby promoting DNA double-strand breaks (DSBs) via homologous recombination (HR). This is Histone acetyltransferase KAT5 from Pongo abelii (Sumatran orangutan).